The sequence spans 360 residues: TIMELESS-interacting protein (360 aa).

Disordered regions lie at residues 1–80, 178–199, 220–246, and 289–360; these read MMDP…QRLA, PSED…PVKV, RMEK…EIPD, and QDVS…KEEY. A compositionally biased stretch (acidic residues) spans 34–48; the sequence is ADDEAEDVANGDDWT. A compositionally biased stretch (basic residues) spans 62–71; that stretch reads PARRVVKRPQ. The tract at residues 74 to 150 is interaction with TIMELESS; that stretch reads LDGQRLASQR…KEVQTCLKKI (77 aa). A compositionally biased stretch (low complexity) spans 225-239; it reads QAQAESQALSQATQS.

It belongs to the CSM3 family. As to quaternary structure, interacts with timeless, which impairs timeless self-association.

The protein resides in the cytoplasm. Its subcellular location is the nucleus. Plays an important role in the control of DNA replication and the maintenance of replication fork stability. Important for cell survival after DNA damage or replication stress. May be required for the replication checkpoint induced by hydroxyurea or ultraviolet light. The polypeptide is TIMELESS-interacting protein (tipin) (Xenopus laevis (African clawed frog)).